A 541-amino-acid polypeptide reads, in one-letter code: MADEDGEGIHPSAPHRNGGGGGGGGSGLHCAGNGGGGGGGPRVVRIVKSESGYGFNVRGQVSEGGQLRSINGELYAPLQHVSAVLPGGAADRAGVRKGDRILEVNHVNVEGATHKQVVDLIRAGEKELILTVLSVPPHEADNLDPSDDSLGQSFYDYTEKQAVPISVPRYKHVEQNGEKFVVYNVYMAGRQLCSKRYREFAILHQNLKREFANFTFPRLPGKWPFSLSEQQLDARRRGLEEYLEKVCSIRVIGESDIMQEFLSESDENYNGVSDVELRVALPDGTTVTVRVKKNSTTDQVYQAIAAKVGMDSTTVNYFALFEVISHSFVRKLAPNEFPHKLYIQNYTSAVPGTCLTIRKWLFTTEEEILLNDNDLAVTYFFHQAVDDVKKGYIKAEEKSYQLQKLYEQRKMVMYLNMLRTCEGYNEIIFPHCACDSRRKGHVITAISITHFKLHACTEEGQLENQVIAFEWDEMQRWDTDEEGMAFCFEYARGEKKPRWVKIFTPYFNYMHECFERVFCELKWRKENIFQMARSQQRDVAT.

The interval 1 to 42 (MADEDGEGIHPSAPHRNGGGGGGGGSGLHCAGNGGGGGGGPR) is disordered. Residues 17–41 (NGGGGGGGGSGLHCAGNGGGGGGGP) are compositionally biased toward gly residues. Residues 43 to 136 (VVRIVKSESG…ELILTVLSVP (94 aa)) enclose the PDZ domain. 2 positions are modified to phosphoserine: Ser-51 and Ser-62. Residues 161-269 (QAVPISVPRY…EFLSESDENY (109 aa)) enclose the PX domain. One can recognise a Ras-associating domain in the interval 273–362 (SDVELRVALP…TCLTIRKWLF (90 aa)). The interval 273–362 (SDVELRVALP…TCLTIRKWLF (90 aa)) is FERM-like region F1. Residues 373 to 421 (NDLAVTYFFHQAVDDVKKGYIKAEEKSYQLQKLYEQRKMVMYLNMLRTC) form an FERM-like region F2 region. The interval 425 to 525 (NEIIFPHCAC…RVFCELKWRK (101 aa)) is FERM-like region F3.

It belongs to the sorting nexin family. Core component of the SNX27-retromer, a multiprotein complex composed of SNX27, the WASH complex and the retromer complex. Interacts (via PDZ domain) with a number of target transmembrane proteins (via PDZ-binding motif): ABCC4, ADRB2, ARHGEF7, GRIA1, GRIA2, GRIN1, GRIN2A GRIN2C, KCNJ6, KCNJ9 and SLC2A1/GLUT1. Interacts (via the FERM-like regions) with the WASH complex. Interacts with SNX1. Interacts with CYTIP. Isoform 1 and isoform 2 directly interact with DGKZ. Isoform 1 and isoform 2 interact with HT4R isoform 5-HTA(A). Interacts with MCC. Interacts (via PDZ domains) with SLC9A3; directs SLC9A3 membrane insertion from early endosomes to the plasma membrane. In terms of tissue distribution, widely expressed. Expressed in cells of hematopoietic origin (at protein level).

The protein localises to the early endosome membrane. The protein resides in the cytoplasm. It is found in the cytosol. Involved in the retrograde transport from endosome to plasma membrane, a trafficking pathway that promotes the recycling of internalized transmembrane proteins. Following internalization, endocytosed transmembrane proteins are delivered to early endosomes and recycled to the plasma membrane instead of being degraded in lysosomes. SNX27 specifically binds and directs sorting of a subset of transmembrane proteins containing a PDZ-binding motif at the C-terminus: following interaction with target transmembrane proteins, associates with the retromer complex, preventing entry into the lysosomal pathway, and promotes retromer-tubule based plasma membrane recycling. SNX27 also binds with the WASH complex. Interacts with membranes containing phosphatidylinositol-3-phosphate (PtdIns(3P)). May participate in establishment of natural killer cell polarity. Recruits CYTIP to early endosomes. This chain is Sorting nexin-27 (SNX27), found in Homo sapiens (Human).